The chain runs to 326 residues: Transposase for insertion sequence element IS4351 (326 aa).

In terms of domain architecture, Integrase catalytic spans 156 to 317; the sequence is IDERPEIVEL…TPNEKFKQII (162 aa).

Belongs to the transposase IS30 family.

Required for the transposition of the insertion element. The protein is Transposase for insertion sequence element IS4351 of Bacteroides fragilis.